The following is a 237-amino-acid chain: Ribosomal RNA small subunit methyltransferase G (237 aa).

S-adenosyl-L-methionine is bound by residues G78, F83, A129–E130, and R148. The segment at K218–L237 is disordered.

This sequence belongs to the methyltransferase superfamily. RNA methyltransferase RsmG family.

Its subcellular location is the cytoplasm. In terms of biological role, specifically methylates the N7 position of a guanine in 16S rRNA. This Streptococcus pneumoniae (strain JJA) protein is Ribosomal RNA small subunit methyltransferase G.